Consider the following 555-residue polypeptide: Carboxysome assembly protein CcmM (555 aa).

The interval Met-1–Val-209 is has carbonic anhydrase (CA) activity. Glu-56 serves as the catalytic Proton donor/acceptor. Positions 75, 102, and 107 each coordinate Zn(2+). Residues Cys-194 and Cys-200 are joined by a disulfide bond. Residues Ser-223 to Pro-315 are rbcS-like repeat 1, SSUL1. Disordered stretches follow at residues Thr-323–Ala-351 and Asn-441–Ala-464. 2 stretches are compositionally biased toward low complexity: residues Ser-330 to Ala-351 and Ala-445 to Ala-464. Positions Tyr-347 to Pro-440 are rbcS-like repeat 2, SSUL2. The segment at Ser-460–Pro-555 is rbcS-like repeat 3, SSUL3.

This sequence belongs to the gamma-class carbonic anhydrase family. As to quaternary structure, probable homotrimer; zinc is bound between adjacent monomers. Full length protein (M58) interacts with CcmN. The C-terminal RbcS-like domains (SSUL) bind to holo-RuBisCO, as does the M35 short form. Requires Zn(2+) as cofactor. In terms of processing, the first amino acid of the short form (equivalent to Val-226) is not seen in Edman degradation, while Ser-230 may be post-translationally modified. Migrates in gels as 2 about equal forms of about 60 and 35 kDa (called M58 and M35). They are probably the result of alternative translation initiation.

The protein resides in the carboxysome. Its subcellular location is the cytoplasm. It catalyses the reaction hydrogencarbonate + H(+) = CO2 + H2O. Carbonic anhydrase (CA) activity is probably under redox control to remain inactive in the cytoplasm. Carbonic anhydrase (CA) activity of full-length protein and N-terminal fragment is inhibited by ethoxyzolamide. N-terminal fragment CA activity is activated under oxidizing conditions and inhibited under reducing conditions. Functionally, functions as a scaffold protein for the assembly of beta-carboxysomes, initiates carboxysome assembly by coalescing RuBisCO (ribulose bisphosphate carboxylase, rbcL-rbcS). Produced as a full-length (M58) and a short form (M35), possibly by alternative translation initiation; probably both forms are required for correct carboxysome assembly and growth. In this strain both forms are equally abundant. A moderately active carbonic anhydrase that catalyzes the reversible hydration of carbon dioxide. Essential to photosynthetic carbon dioxide fixation, supplies CO(2) to ribulose bisphosphate carboxylase (RuBisCO) in the carboxysome. Also hydrolyzes COS. In terms of biological role, beta-carboxysome assembly initiates when soluble RuBisCO is condensed into a liquid matrix in a pre-carboxysome by the RbcS-like domains of probably both forms of CcmM. CcmN interacts with the N-terminus of full length CcmM, and then recruits the shell proteins (CcmK) via CcmN's encapsulation peptide. Shell formation requires both CcmK proteins and CcmO. CcmL caps the otherwise elongated carboxysome. Once fully encapsulated carboxysomes are formed, they migrate within the cell probably via interactions with the cytoskeleton. The chain is Carboxysome assembly protein CcmM from Nostoc sp. (strain PCC 7120 / SAG 25.82 / UTEX 2576).